The following is a 220-amino-acid chain: PKHD-type hydroxylase PCC7424_1929 (220 aa).

A Fe2OG dioxygenase domain is found at 77-173 (KIHSLLFSRY…RLVAVGWVQS (97 aa)). Residues histidine 95, aspartate 97, and histidine 154 each coordinate Fe cation. Arginine 164 provides a ligand contact to 2-oxoglutarate.

It depends on Fe(2+) as a cofactor. The cofactor is L-ascorbate.

This is PKHD-type hydroxylase PCC7424_1929 from Gloeothece citriformis (strain PCC 7424) (Cyanothece sp. (strain PCC 7424)).